The chain runs to 899 residues: Lipoxygenase 2, chloroplastic (899 aa).

The transit peptide at 1–57 (MLKPQIHKPHLVNKLPLGTPFIPSHASIASFSTTSLRTLSVQKCYRRYIRYTSSNIK) directs the protein to the chloroplast. One can recognise a PLAT domain in the interval 83–203 (ALTAVTVGLL…DNPDKRIFFL (121 aa)). One can recognise a Lipoxygenase domain in the interval 206-899 (SYLPSETPEG…GKGVPYSISI (694 aa)). The tract at residues 252-286 (DPDTDSDMARPVLGGNEHPFPRRCRTGRKMTSTEP) is disordered. Fe cation contacts are provided by His557, His562, His749, Asn753, and Ile899.

It belongs to the lipoxygenase family. It depends on Fe cation as a cofactor. As to expression, confined to glandular trichomes in flowers.

Its subcellular location is the plastid. The protein localises to the chloroplast. It participates in lipid metabolism; oxylipin biosynthesis. Plant lipoxygenases may be involved in a number of diverse aspects of plant physiology including growth and development, pest resistance, and senescence or responses to wounding. Catalyzes the hydroperoxidation of lipids containing a cis,cis-1,4-pentadiene structure. The polypeptide is Lipoxygenase 2, chloroplastic (Tanacetum cinerariifolium (Dalmatian daisy)).